The following is a 167-amino-acid chain: Calcium-binding protein CML19 (167 aa).

EF-hand domains are found at residues 23–58 (QKRR…LGFE), 59–94 (MNNQ…KFGE), 96–131 (DSID…LGEN), and 132–167 (FTDN…TSYG). Ca(2+) is bound by residues Asp36, Asp38, Ser40, Ser42, Glu47, Asp72, Asn74, Ser76, Glu83, Asp109, Asp111, Asn113, Lys115, Asp120, Asp145, Asp147, Asp149, Glu151, and Glu156.

The protein belongs to the centrin family. In terms of assembly, interacts with RAD4. Calcium is required for this interaction. Interacts with SAC3B. In terms of tissue distribution, expressed in leaves, roots, and at lower level in stems. Barely detectable in flower buds and flowers.

The protein localises to the cytoplasm. It is found in the nucleus. Functionally, potential calcium sensor that binds calcium in vitro. Modulates homologous recombination and nucleotide excision repair (NER). Involved in the early response to UV irradiation. The sequence is that of Calcium-binding protein CML19 from Arabidopsis thaliana (Mouse-ear cress).